Consider the following 313-residue polypeptide: tRNA dimethylallyltransferase (313 aa).

17 to 24 contributes to the ATP binding site; it reads GPTASGKT. 19–24 serves as a coordination point for substrate; that stretch reads TASGKT. 3 interaction with substrate tRNA regions span residues 42-45, 166-170, and 247-252; these read DSAL, QRLSR, and RCVGYR.

The protein belongs to the IPP transferase family. As to quaternary structure, monomer. Mg(2+) serves as cofactor.

The catalysed reaction is adenosine(37) in tRNA + dimethylallyl diphosphate = N(6)-dimethylallyladenosine(37) in tRNA + diphosphate. Functionally, catalyzes the transfer of a dimethylallyl group onto the adenine at position 37 in tRNAs that read codons beginning with uridine, leading to the formation of N6-(dimethylallyl)adenosine (i(6)A). This is tRNA dimethylallyltransferase from Yersinia pseudotuberculosis serotype O:1b (strain IP 31758).